We begin with the raw amino-acid sequence, 908 residues long: Translation initiation factor IF-2 (908 aa).

Disordered regions lie at residues 123-154 (EEPP…EELK) and 212-278 (KKEP…VSEK). Residues 407 to 577 (ERAPIVTIMG…LFEAELLELK (171 aa)) enclose the tr-type G domain. Residues 416–423 (GHVDHGKT) form a G1 region. Residue 416–423 (GHVDHGKT) participates in GTP binding. The tract at residues 441–445 (GITQH) is G2. The segment at 463-466 (DTPG) is G3. GTP is bound by residues 463–467 (DTPGH) and 517–520 (NKMD). Residues 517-520 (NKMD) form a G4 region. A G5 region spans residues 553 to 555 (SAI).

This sequence belongs to the TRAFAC class translation factor GTPase superfamily. Classic translation factor GTPase family. IF-2 subfamily.

It is found in the cytoplasm. Its function is as follows. One of the essential components for the initiation of protein synthesis. Protects formylmethionyl-tRNA from spontaneous hydrolysis and promotes its binding to the 30S ribosomal subunits. Also involved in the hydrolysis of GTP during the formation of the 70S ribosomal complex. The chain is Translation initiation factor IF-2 from Amoebophilus asiaticus (strain 5a2).